Consider the following 134-residue polypeptide: MATNVKKVKKLRPKNVTVGIAHIHSSHQNTIISFTDKQGNVISWASSGSIGFKGTKKKTAYAATLATAAAAQKAREHGMREVIVELKGTGQGKEAARKQIITSGLNILLTKDVTPVPHNGTRPPRKWFKRQEKR.

The interval 114–134 (TPVPHNGTRPPRKWFKRQEKR) is disordered. Basic residues predominate over residues 123 to 134 (PPRKWFKRQEKR).

It belongs to the universal ribosomal protein uS11 family. In terms of assembly, part of the 30S ribosomal subunit. Interacts with proteins S7 and S18. Binds to IF-3.

In terms of biological role, located on the platform of the 30S subunit, it bridges several disparate RNA helices of the 16S rRNA. Forms part of the Shine-Dalgarno cleft in the 70S ribosome. This chain is Small ribosomal subunit protein uS11, found in Mesomycoplasma hyopneumoniae (strain 232) (Mycoplasma hyopneumoniae).